Reading from the N-terminus, the 3390-residue chain is Genome polyprotein (3390 aa).

The tract at residues M1–M15 is interaction with host EXOC1. The Cytoplasmic segment spans residues M1–K100. Residues L37 to F72 form a hydrophobic; homodimerization of capsid protein C region. Positions T101–A114 are cleaved as a propeptide — ER anchor for the capsid protein C, removed in mature form by serine protease NS3. A helical transmembrane segment spans residues T101–R120. The Extracellular portion of the chain corresponds to D121–R243. An N-linked (GlcNAc...) asparagine; by host glycan is attached at N183. A helical membrane pass occupies residues H244 to Q264. K265 is a topological domain (cytoplasmic). Residues V266–T280 traverse the membrane as a helical segment. Over M281–T723 the chain is Extracellular. Cystine bridges form between C283–C310, C340–C401, C354–C385, and C372–C396. N347 carries N-linked (GlcNAc...) asparagine; by host glycosylation. Residues D378–G391 are fusion peptide. N433 is a glycosylation site (N-linked (GlcNAc...) asparagine; by host). 2 cysteine pairs are disulfide-bonded: C463–C563 and C580–C611. The helical transmembrane segment at A724–I744 threads the bilayer. At G745–N750 the chain is on the cytoplasmic side. Residues T751–V771 form a helical membrane-spanning segment. The Extracellular segment spans residues Q772 to M1193. Disulfide bonds link C777/C788, C828/C916, C952/C996, C1053/C1102, C1064/C1086, and C1085/C1089. 2 N-linked (GlcNAc...) asparagine; by host glycosylation sites follow: N903 and N980. Residues N1132 and N1188 are each glycosylated (N-linked (GlcNAc...) asparagine; by host). The helical transmembrane segment at G1194–L1218 threads the bilayer. Over R1219–R1224 the chain is Cytoplasmic. A helical membrane pass occupies residues E1225 to E1243. Over D1244 to T1267 the chain is Lumenal. Residues Y1268–V1288 traverse the membrane as a helical segment. A topological domain (cytoplasmic) is located at residue A1289. A helical membrane pass occupies residues W1290–S1308. Residues S1309–D1315 are Lumenal-facing. Residues W1316–L1336 form a helical membrane-spanning segment. Residues K1337–S1344 lie on the Cytoplasmic side of the membrane. The helical transmembrane segment at W1345–L1365 threads the bilayer. Over R1366 to D1368 the chain is Lumenal. Residues V1369–G1389 form a helical membrane-spanning segment. At T1390–K1443 the chain is on the cytoplasmic side. Positions V1396–E1435 are interacts with and activates NS3 protease. Positions T1444–W1464 form an intramembrane region, helical. The Cytoplasmic segment spans residues H1465–T2146. A Peptidase S7 domain is found at S1474–E1651. Active-site charge relay system; for serine protease NS3 activity residues include H1524, D1548, and S1608. Residues E1654 to E1810 form the Helicase ATP-binding domain. The important for RNA-binding stretch occupies residues K1658–N1661. Position 1667 to 1674 (L1667 to T1674) interacts with ATP. The DEAH box motif lies at D1758 to H1761. In terms of domain architecture, Helicase C-terminal spans S1820–E1986. The residue at position 1862 (K1862) is an N6-acetyllysine; by host. A helical membrane pass occupies residues L2147 to G2167. The Lumenal portion of the chain corresponds to K2168–G2169. Positions I2170–A2190 form an intramembrane region, helical. Position 2191 (E2191) is a topological domain, lumenal. The helical transmembrane segment at V2192 to I2212 threads the bilayer. Over P2213–A2227 the chain is Cytoplasmic. The chain crosses the membrane as a helical span at residues Y2228–L2248. Residues E2249–D2273 are Lumenal-facing. Positions L2274 to L2294 form an intramembrane region, helical. Residues R2295–V2305 are Lumenal-facing. N2300 and N2304 each carry an N-linked (GlcNAc...) asparagine; by host glycan. Residues S2306–I2326 constitute an intramembrane region (helical). Over S2327–P2346 the chain is Lumenal. Residues L2347–L2367 form a helical membrane-spanning segment. Residues Q2368–Q2412 are Cytoplasmic-facing. Residues V2413 to C2433 form a helical membrane-spanning segment. The Lumenal segment spans residues E2434–T2458. N-linked (GlcNAc...) asparagine; by host glycosylation is present at N2456. A helical transmembrane segment spans residues I2459–F2479. Topologically, residues S2480–W3390 are cytoplasmic. Residues T2492–H2753 form the mRNA cap 0-1 NS5-type MT domain. Residue S2546 coordinates S-adenosyl-L-methionine. Position 2546 is a phosphoserine (S2546). The For 2'-O-MTase activity role is filled by K2551. An SUMO-interacting motif motif is present at residues V2567 to L2570. The S-adenosyl-L-methionine site is built by G2576, W2577, T2594, K2595, D2621, and V2622. Residue D2636 is the For 2'-O-MTase activity of the active site. I2637 lines the S-adenosyl-L-methionine pocket. Catalysis depends on for 2'-O-MTase activity residues K2670 and E2706. Y2708 is an S-adenosyl-L-methionine binding site. The Zn(2+) site is built by E2927, H2931, C2936, and C2939. The region spanning A3018 to L3168 is the RdRp catalytic domain. Residues H3202, C3218, and C3337 each coordinate Zn(2+).

This sequence in the N-terminal section; belongs to the class I-like SAM-binding methyltransferase superfamily. mRNA cap 0-1 NS5-type methyltransferase family. In terms of assembly, homodimer. Interacts (via N-terminus) with host EXOC1 (via C-terminus); this interaction results in EXOC1 degradation through the proteasome degradation pathway. As to quaternary structure, forms heterodimers with envelope protein E in the endoplasmic reticulum and Golgi. Homodimer; in the endoplasmic reticulum and Golgi. Interacts with protein prM. Interacts with non-structural protein 1. In terms of assembly, homodimer; Homohexamer when secreted. Interacts with envelope protein E. As to quaternary structure, interacts (via N-terminus) with serine protease NS3. Forms a heterodimer with serine protease NS3. May form homooligomers. In terms of assembly, forms a heterodimer with NS2B. Interacts with NS4B. Interacts with unphosphorylated RNA-directed RNA polymerase NS5; this interaction stimulates RNA-directed RNA polymerase NS5 guanylyltransferase activity. Interacts with host SHFL. As to quaternary structure, interacts with host MAVS; this interaction inhibits the synthesis of IFN-beta. Interacts with host SHFL. Interacts with host AUP1; the interaction occurs in the presence of Dengue virus NS4B and induces lipophagy which facilitates production of virus progeny particles. Interacts with serine protease NS3. In terms of assembly, homodimer. Interacts with host STAT2; this interaction inhibits the phosphorylation of the latter, and, when all viral proteins are present (polyprotein), targets STAT2 for degradation. Interacts with serine protease NS3. Specific enzymatic cleavages in vivo yield mature proteins. Cleavages in the lumen of endoplasmic reticulum are performed by host signal peptidase, whereas cleavages in the cytoplasmic side are performed by serine protease NS3. Signal cleavage at the 2K-4B site requires a prior NS3 protease-mediated cleavage at the 4A-2K site. Post-translationally, cleaved in post-Golgi vesicles by a host furin, releasing the mature small envelope protein M, and peptide pr. This cleavage is incomplete as up to 30% of viral particles still carry uncleaved prM. In terms of processing, N-glycosylated. N-glycosylated. The excreted form is glycosylated and this is required for efficient secretion of the protein from infected cells. Post-translationally, acetylated by host KAT5. Acetylation modulates NS3 RNA-binding and unwinding activities and plays an important positive role for viral replication. In terms of processing, sumoylation of RNA-directed RNA polymerase NS5 increases NS5 protein stability allowing proper viral RNA replication. Phosphorylated on serines residues. This phosphorylation may trigger NS5 nuclear localization.

Its subcellular location is the virion. The protein localises to the host nucleus. It localises to the host cytoplasm. It is found in the host perinuclear region. The protein resides in the secreted. Its subcellular location is the virion membrane. The protein localises to the host endoplasmic reticulum membrane. It localises to the host mitochondrion. It carries out the reaction Selective hydrolysis of -Xaa-Xaa-|-Yaa- bonds in which each of the Xaa can be either Arg or Lys and Yaa can be either Ser or Ala.. It catalyses the reaction RNA(n) + a ribonucleoside 5'-triphosphate = RNA(n+1) + diphosphate. The enzyme catalyses a ribonucleoside 5'-triphosphate + H2O = a ribonucleoside 5'-diphosphate + phosphate + H(+). The catalysed reaction is ATP + H2O = ADP + phosphate + H(+). It carries out the reaction a 5'-end (5'-triphosphoguanosine)-ribonucleoside in mRNA + S-adenosyl-L-methionine = a 5'-end (N(7)-methyl 5'-triphosphoguanosine)-ribonucleoside in mRNA + S-adenosyl-L-homocysteine. It catalyses the reaction a 5'-end (N(7)-methyl 5'-triphosphoguanosine)-ribonucleoside in mRNA + S-adenosyl-L-methionine = a 5'-end (N(7)-methyl 5'-triphosphoguanosine)-(2'-O-methyl-ribonucleoside) in mRNA + S-adenosyl-L-homocysteine + H(+). In terms of biological role, plays a role in virus budding by binding to the cell membrane and gathering the viral RNA into a nucleocapsid that forms the core of a mature virus particle. During virus entry, may induce genome penetration into the host cytoplasm after hemifusion induced by the surface proteins. Can migrate to the cell nucleus where it modulates host functions. Overcomes the anti-viral effects of host EXOC1 by sequestering and degrading the latter through the proteasome degradation pathway. Its function is as follows. Inhibits RNA silencing by interfering with host Dicer. Prevents premature fusion activity of envelope proteins in trans-Golgi by binding to envelope protein E at pH6.0. After virion release in extracellular space, gets dissociated from E dimers. Functionally, acts as a chaperone for envelope protein E during intracellular virion assembly by masking and inactivating envelope protein E fusion peptide. prM is the only viral peptide matured by host furin in the trans-Golgi network probably to avoid catastrophic activation of the viral fusion activity in acidic Golgi compartment prior to virion release. prM-E cleavage is inefficient, and many virions are only partially matured. These uncleaved prM would play a role in immune evasion. In terms of biological role, may play a role in virus budding. Exerts cytotoxic effects by activating a mitochondrial apoptotic pathway through M ectodomain. May display a viroporin activity. Its function is as follows. Binds to host cell surface receptor and mediates fusion between viral and cellular membranes. Envelope protein is synthesized in the endoplasmic reticulum in the form of heterodimer with protein prM. They play a role in virion budding in the ER, and the newly formed immature particle is covered with 60 spikes composed of heterodimer between precursor prM and envelope protein E. The virion is transported to the Golgi apparatus where the low pH causes dissociation of PrM-E heterodimers and formation of E homodimers. prM-E cleavage is inefficient, and many virions are only partially matured. These uncleaved prM would play a role in immune evasion. Involved in immune evasion, pathogenesis and viral replication. Once cleaved off the polyprotein, is targeted to three destinations: the viral replication cycle, the plasma membrane and the extracellular compartment. Essential for viral replication. Required for formation of the replication complex and recruitment of other non-structural proteins to the ER-derived membrane structures. Excreted as a hexameric lipoparticle that plays a role against host immune response. Antagonizing the complement function. Binds to the host macrophages and dendritic cells. Inhibits signal transduction originating from Toll-like receptor 3 (TLR3). Functionally, disrupts the host endothelial glycocalyx layer of host pulmonary microvascular endothelial cells, inducing degradation of sialic acid and shedding of heparan sulfate proteoglycans. NS1 induces expression of sialidases, heparanase, and activates cathepsin L, which activates heparanase via enzymatic cleavage. These effects are probably linked to the endothelial hyperpermeability observed in severe dengue disease. In terms of biological role, component of the viral RNA replication complex that functions in virion assembly and antagonizes the host immune response. Its function is as follows. Required cofactor for the serine protease function of NS3. May have membrane-destabilizing activity and form viroporins. Displays three enzymatic activities: serine protease, NTPase and RNA helicase. NS3 serine protease, in association with NS2B, performs its autocleavage and cleaves the polyprotein at dibasic sites in the cytoplasm: C-prM, NS2A-NS2B, NS2B-NS3, NS3-NS4A, NS4A-2K and NS4B-NS5. NS3 RNA helicase binds RNA and unwinds dsRNA in the 3' to 5' direction. Functionally, regulates the ATPase activity of the NS3 helicase activity. NS4A allows NS3 helicase to conserve energy during unwinding. Plays a role in the inhibition of the host innate immune response. Interacts with host MAVS and thereby prevents the interaction between RIGI and MAVS. In turn, IFN-beta production is impaired. Interacts with host AUP1 which mediates induction of lipophagy in host cells and facilitates production of virus progeny particles. In terms of biological role, functions as a signal peptide for NS4B and is required for the interferon antagonism activity of the latter. Its function is as follows. Induces the formation of ER-derived membrane vesicles where the viral replication takes place. Inhibits interferon (IFN)-induced host STAT1 phosphorylation and nuclear translocation, thereby preventing the establishment of cellular antiviral state by blocking the IFN-alpha/beta pathway. Replicates the viral (+) and (-) RNA genome, and performs the capping of genomes in the cytoplasm. NS5 methylates viral RNA cap at guanine N-7 and ribose 2'-O positions. Besides its role in RNA genome replication, also prevents the establishment of cellular antiviral state by blocking the interferon-alpha/beta (IFN-alpha/beta) signaling pathway. Inhibits host TYK2 and STAT2 phosphorylation, thereby preventing activation of JAK-STAT signaling pathway. This is Genome polyprotein (pol) from Dengue virus type 3 (strain Sri Lanka/1266/2000) (DENV-3).